Consider the following 154-residue polypeptide: Large ribosomal subunit protein uL13 (154 aa).

The protein belongs to the universal ribosomal protein uL13 family. Part of the 50S ribosomal subunit.

This protein is one of the early assembly proteins of the 50S ribosomal subunit, although it is not seen to bind rRNA by itself. It is important during the early stages of 50S assembly. In Rhodopseudomonas palustris (strain BisB5), this protein is Large ribosomal subunit protein uL13.